The primary structure comprises 443 residues: Tryptophan synthase beta chain 2, chloroplastic (443 aa).

Residues 1–32 (PGPPPPAPEGRRRRGRGRNAAGQAVAAEASPA) are disordered. The transit peptide at 1 to 45 (PGPPPPAPEGRRRRGRGRNAAGQAVAAEASPAAVEMGNGAAAPGL) directs the protein to the chloroplast. Low complexity predominate over residues 18 to 32 (RNAAGQAVAAEASPA). K138 carries the post-translational modification N6-(pyridoxal phosphate)lysine.

Belongs to the TrpB family. As to quaternary structure, tetramer of two alpha and two beta chains. The cofactor is pyridoxal 5'-phosphate.

It localises to the plastid. Its subcellular location is the chloroplast. It carries out the reaction (1S,2R)-1-C-(indol-3-yl)glycerol 3-phosphate + L-serine = D-glyceraldehyde 3-phosphate + L-tryptophan + H2O. It participates in amino-acid biosynthesis; L-tryptophan biosynthesis; L-tryptophan from chorismate: step 5/5. Functionally, the beta subunit is responsible for the synthesis of L-tryptophan from indole and L-serine. This is Tryptophan synthase beta chain 2, chloroplastic (TSB2) from Zea mays (Maize).